The following is a 239-amino-acid chain: Ribonuclease 3 (239 aa).

The RNase III domain maps to 18-141; the sequence is YLTLEKALGY…LMAGVYLEAG (124 aa). Position 54 (glutamate 54) interacts with Mg(2+). Residue aspartate 58 is part of the active site. Serine 127 and glutamate 130 together coordinate Mg(2+). Glutamate 130 is an active-site residue. The region spanning 168 to 237 is the DRBM domain; that stretch reads DYKTALQELT…AYQALQKLKE (70 aa).

The protein belongs to the ribonuclease III family. As to quaternary structure, homodimer. It depends on Mg(2+) as a cofactor.

It is found in the cytoplasm. The catalysed reaction is Endonucleolytic cleavage to 5'-phosphomonoester.. Its function is as follows. Digests double-stranded RNA. Involved in the processing of primary rRNA transcript to yield the immediate precursors to the large and small rRNAs (23S and 16S). Processes some mRNAs, and tRNAs when they are encoded in the rRNA operon. Processes pre-crRNA and tracrRNA of type II CRISPR loci if present in the organism. This Helicobacter pylori (strain J99 / ATCC 700824) (Campylobacter pylori J99) protein is Ribonuclease 3.